The primary structure comprises 396 residues: Elongation factor Tu (396 aa).

Positions 10–206 (KPHVNIGTIG…AVDNYIPEPE (197 aa)) constitute a tr-type G domain. The tract at residues 19–26 (GHVDHGKT) is G1. Residue 19 to 26 (GHVDHGKT) coordinates GTP. Threonine 26 is a Mg(2+) binding site. The interval 60-64 (GITIA) is G2. The G3 stretch occupies residues 81–84 (DCPG). Residues 81–85 (DCPGH) and 136–139 (NKAD) each bind GTP. Residues 136–139 (NKAD) are G4. Residues 174–176 (SAL) are G5.

This sequence belongs to the TRAFAC class translation factor GTPase superfamily. Classic translation factor GTPase family. EF-Tu/EF-1A subfamily. As to quaternary structure, monomer.

The protein resides in the cytoplasm. The enzyme catalyses GTP + H2O = GDP + phosphate + H(+). GTP hydrolase that promotes the GTP-dependent binding of aminoacyl-tRNA to the A-site of ribosomes during protein biosynthesis. In Geobacter sulfurreducens (strain ATCC 51573 / DSM 12127 / PCA), this protein is Elongation factor Tu.